The sequence spans 271 residues: uncharacterized protein (271 aa).

3 Solcar repeats span residues Val3–Arg74, Glu81–Tyr163, and Asp171–Lys268. A run of 6 helical transmembrane segments spans residues Thr5–Ile26, Gly49–Val69, Ile84–Leu104, Gly138–Glu158, Trp170–Ile190, and Phe240–Val261.

It belongs to the mitochondrial carrier (TC 2.A.29) family.

Its subcellular location is the mitochondrion inner membrane. This is an uncharacterized protein from Schizosaccharomyces pombe (strain 972 / ATCC 24843) (Fission yeast).